We begin with the raw amino-acid sequence, 439 residues long: Tol-Pal system protein TolB (439 aa).

Positions 1 to 22 (MKKPLRWLAALTALLLPLSALA) are cleaved as a signal peptide.

This sequence belongs to the TolB family. As to quaternary structure, the Tol-Pal system is composed of five core proteins: the inner membrane proteins TolA, TolQ and TolR, the periplasmic protein TolB and the outer membrane protein Pal. They form a network linking the inner and outer membranes and the peptidoglycan layer.

The protein resides in the periplasm. Part of the Tol-Pal system, which plays a role in outer membrane invagination during cell division and is important for maintaining outer membrane integrity. This is Tol-Pal system protein TolB from Xanthomonas axonopodis pv. citri (strain 306).